We begin with the raw amino-acid sequence, 2890 residues long: Bifunctional DNA-directed RNA polymerase subunit beta-beta' (2890 aa).

The segment at 1 to 1377 (MSKKIPLKNR…DINIFGDDVD (1377 aa)) is DNA-directed RNA polymerase subunit beta. The interval 1384 to 2890 (PIVIKEDDRP…LRTLEDGPKF (1507 aa)) is DNA-directed RNA polymerase subunit beta'. Residues Cys1449, Cys1451, Cys1465, and Cys1468 each coordinate Zn(2+). Mg(2+) contacts are provided by Asp1849, Asp1851, and Asp1853. Zn(2+) is bound by residues Cys2179, Cys2253, Cys2260, and Cys2263.

In the N-terminal section; belongs to the RNA polymerase beta chain family. It in the C-terminal section; belongs to the RNA polymerase beta' chain family. The RNAP catalytic core consists of 2 alpha, 1 beta/beta' and 1 omega subunit. When a sigma factor is associated with the core the holoenzyme is formed, which can initiate transcription. It depends on Mg(2+) as a cofactor. Zn(2+) serves as cofactor.

The catalysed reaction is RNA(n) + a ribonucleoside 5'-triphosphate = RNA(n+1) + diphosphate. In terms of biological role, DNA-dependent RNA polymerase catalyzes the transcription of DNA into RNA using the four ribonucleoside triphosphates as substrates. The sequence is that of Bifunctional DNA-directed RNA polymerase subunit beta-beta' (rpoBC) from Helicobacter pylori (strain HPAG1).